A 353-amino-acid chain; its full sequence is Biotin synthase (353 aa).

In terms of domain architecture, Radical SAM core spans 51–270; the sequence is NEVQCNQLLN…IALARIMMPK (220 aa). Residues Cys66, Cys70, and Cys73 each coordinate [4Fe-4S] cluster. Residues Cys110, Cys141, Cys201, and Arg274 each coordinate [2Fe-2S] cluster. Positions 330–353 are disordered; that stretch reads APVEAHSHDHDHDHHDHHHGHSHS. Basic and acidic residues predominate over residues 334–343; the sequence is AHSHDHDHDH. Positions 344-353 are enriched in basic residues; sequence HDHHHGHSHS.

The protein belongs to the radical SAM superfamily. Biotin synthase family. As to quaternary structure, homodimer. The cofactor is [4Fe-4S] cluster. [2Fe-2S] cluster is required as a cofactor.

The enzyme catalyses (4R,5S)-dethiobiotin + (sulfur carrier)-SH + 2 reduced [2Fe-2S]-[ferredoxin] + 2 S-adenosyl-L-methionine = (sulfur carrier)-H + biotin + 2 5'-deoxyadenosine + 2 L-methionine + 2 oxidized [2Fe-2S]-[ferredoxin]. It participates in cofactor biosynthesis; biotin biosynthesis; biotin from 7,8-diaminononanoate: step 2/2. Its function is as follows. Catalyzes the conversion of dethiobiotin (DTB) to biotin by the insertion of a sulfur atom into dethiobiotin via a radical-based mechanism. This is Biotin synthase from Rhodopseudomonas palustris (strain HaA2).